We begin with the raw amino-acid sequence, 305 residues long: Lysosomal thioesterase PPT2 (305 aa).

A signal peptide spans 1–32 (MLGLPERRLPSAEFLLLLPFLLLLLLLLPAAP). Cystine bridges form between cysteine 112/cysteine 120 and cysteine 168/cysteine 179. Serine 114 functions as the Nucleophile in the catalytic mechanism. An N-linked (GlcNAc...) asparagine glycan is attached at asparagine 193. Residues aspartate 231 and histidine 286 contribute to the active site. A disulfide bridge links cysteine 279 with cysteine 299.

This sequence belongs to the palmitoyl-protein thioesterase family.

Its subcellular location is the lysosome. It carries out the reaction hexadecanoyl-CoA + H2O = hexadecanoate + CoA + H(+). The enzyme catalyses S-hexadecanoyl-N-acetylcysteamine + H2O = N-acetylcysteamine + hexadecanoate + H(+). Functionally, catalyzes the cleavage of thioester bonds from S-palmitoyl-CoA or S-palmitoyl-N-acetylcysteamine (unbranched structures) but does not have activity against palmitoylcysteine or palmitoylated proteins, branched structures or bulky head groups. Conversely, hydrolyzes both long and short chain fatty acyl-CoA substrate. The protein is Lysosomal thioesterase PPT2 (PPT2) of Bos taurus (Bovine).